Reading from the N-terminus, the 427-residue chain is Glutamate-1-semialdehyde 2,1-aminomutase (427 aa).

An N6-(pyridoxal phosphate)lysine modification is found at K268.

Belongs to the class-III pyridoxal-phosphate-dependent aminotransferase family. HemL subfamily. Pyridoxal 5'-phosphate is required as a cofactor.

The protein localises to the cytoplasm. The catalysed reaction is (S)-4-amino-5-oxopentanoate = 5-aminolevulinate. The protein operates within porphyrin-containing compound metabolism; protoporphyrin-IX biosynthesis; 5-aminolevulinate from L-glutamyl-tRNA(Glu): step 2/2. This Methanococcus vannielii (strain ATCC 35089 / DSM 1224 / JCM 13029 / OCM 148 / SB) protein is Glutamate-1-semialdehyde 2,1-aminomutase.